The sequence spans 599 residues: Elongation factor 4 (599 aa).

Residues 2–184 (KNIRNFSIIA…RLVRDIPPPE (183 aa)) enclose the tr-type G domain. Residues 14-19 (DHGKST) and 131-134 (NKID) each bind GTP.

Belongs to the TRAFAC class translation factor GTPase superfamily. Classic translation factor GTPase family. LepA subfamily.

Its subcellular location is the cell inner membrane. The catalysed reaction is GTP + H2O = GDP + phosphate + H(+). In terms of biological role, required for accurate and efficient protein synthesis under certain stress conditions. May act as a fidelity factor of the translation reaction, by catalyzing a one-codon backward translocation of tRNAs on improperly translocated ribosomes. Back-translocation proceeds from a post-translocation (POST) complex to a pre-translocation (PRE) complex, thus giving elongation factor G a second chance to translocate the tRNAs correctly. Binds to ribosomes in a GTP-dependent manner. This is Elongation factor 4 from Escherichia coli (strain UTI89 / UPEC).